The primary structure comprises 1173 residues: BRCA2-interacting transcriptional repressor EMSY (1173 aa).

An ENT domain is found at 16 to 100 (CKRILRKLEL…EWSIEGRRLV (85 aa)). Positions 149-177 (STTSTPPSASAPSSSSAAVKSPRPASPAS) are enriched in low complexity. 7 disordered regions span residues 149 to 179 (STTS…ASNV), 191 to 216 (KSVS…SSPV), 676 to 720 (NRSA…DAPP), 797 to 816 (SAEQ…ESDA), 905 to 998 (RVCE…GAQV), 1020 to 1046 (PRAP…EKPS), and 1139 to 1173 (DYTS…DQSQ). Positions 683–693 (TTSTHTSAAAA) are enriched in low complexity. Low complexity-rich tracts occupy residues 911-921 (SSSSSSSSSSS) and 937-953 (SSSS…TPHT). Composition is skewed to polar residues over residues 961–976 (QAPT…TQLS) and 989–998 (SSKTSSGAQV). The span at 1025-1040 (SSSSSSEAALKLQAES) shows a compositional bias: low complexity. Residues 1148–1159 (EQAMEQEVDSSN) show a composition bias toward acidic residues.

Homodimer.

The protein resides in the nucleus. Functionally, regulator which is able to repress transcription, possibly via its interaction with a multiprotein chromatin remodeling complex that modifies the chromatin. The protein is BRCA2-interacting transcriptional repressor EMSY of Danio rerio (Zebrafish).